The chain runs to 413 residues: Peptide chain release factor 1, mitochondrial (413 aa).

The N-terminal 40 residues, 1–40 (MRVLIRPNFLSNLIRYCSRGTHSHDRSLRSVLSSNMIRLY), are a transit peptide targeting the mitochondrion. N5-methylglutamine is present on Gln-287.

This sequence belongs to the prokaryotic/mitochondrial release factor family. Post-translationally, methylation increases the termination efficiency of RF1. In terms of tissue distribution, mostly expressed in seedlings, stems and adult plants, and, to a lower extent, in siliques. Barely detected in etiolated seedlings and roots.

It localises to the mitochondrion. Functionally, peptide chain release factor 1 directs the termination of translation in response to the peptide chain termination codons UAG and UAA in mitochondria. The polypeptide is Peptide chain release factor 1, mitochondrial (Arabidopsis thaliana (Mouse-ear cress)).